We begin with the raw amino-acid sequence, 948 residues long: UvrABC system protein A (948 aa).

Residue 33-40 (GLSGSGKS) coordinates ATP. Residues 252 to 279 (CPICGFSIGELEPRMFSFNSPFGACPTC) form a C4-type zinc finger. ABC transporter domains lie at 309–587 (WIPT…KKSL) and 607–935 (ASDR…KYLK). 639 to 646 (GVSGSGKS) is an ATP binding site. The segment at 738–764 (CEACKGDGIIKIEMHFLPDVYVPCEVC) adopts a C4-type zinc-finger fold.

The protein belongs to the ABC transporter superfamily. UvrA family. In terms of assembly, forms a heterotetramer with UvrB during the search for lesions.

Its subcellular location is the cytoplasm. The UvrABC repair system catalyzes the recognition and processing of DNA lesions. UvrA is an ATPase and a DNA-binding protein. A damage recognition complex composed of 2 UvrA and 2 UvrB subunits scans DNA for abnormalities. When the presence of a lesion has been verified by UvrB, the UvrA molecules dissociate. This Staphylococcus aureus (strain N315) protein is UvrABC system protein A.